Consider the following 204-residue polypeptide: uncharacterized protein (204 aa).

H9 functions as the Tele-phosphohistidine intermediate in the catalytic mechanism. E86 functions as the Proton donor/acceptor in the catalytic mechanism.

Belongs to the phosphoglycerate mutase family.

This is an uncharacterized protein from Acanthamoeba polyphaga (Amoeba).